The chain runs to 736 residues: Catalase-peroxidase (736 aa).

Positions 1–30 are disordered; that stretch reads MGGNVMTDDKMNSVTSGANKQETGRDMSNR. Polar residues predominate over residues 12 to 21; it reads NSVTSGANKQ. A cross-link (tryptophyl-tyrosyl-methioninium (Trp-Tyr) (with M-250)) is located at residues 101-224; that stretch reads WHSAGTYRAG…LAAVQMGLIY (124 aa). Histidine 102 functions as the Proton acceptor in the catalytic mechanism. Residues 224-250 constitute a cross-link (tryptophyl-tyrosyl-methioninium (Tyr-Met) (with W-101)); it reads YVNPEGPNGNPDPIAAAKDIREVFARM. Histidine 265 lines the heme b pocket. The disordered stretch occupies residues 351–373; that stretch reads KGGAGAGTIPDAHDPSKRHAPSM.

This sequence belongs to the peroxidase family. Peroxidase/catalase subfamily. In terms of assembly, homodimer or homotetramer. Requires heme b as cofactor. In terms of processing, formation of the three residue Trp-Tyr-Met cross-link is important for the catalase, but not the peroxidase activity of the enzyme.

It catalyses the reaction H2O2 + AH2 = A + 2 H2O. The catalysed reaction is 2 H2O2 = O2 + 2 H2O. Functionally, bifunctional enzyme with both catalase and broad-spectrum peroxidase activity. The chain is Catalase-peroxidase from Methanosarcina acetivorans (strain ATCC 35395 / DSM 2834 / JCM 12185 / C2A).